The following is a 526-amino-acid chain: Lysine--tRNA ligase (526 aa).

The 'HIGH' region motif lies at 30–38; the sequence is PSGYVHIGN. The Zn(2+) site is built by aspartate 95, cysteine 99, histidine 100, histidine 106, cysteine 177, and cysteine 199. The short motif at 280–284 is the 'KMSKS' region element; that stretch reads KMSGS.

It belongs to the class-I aminoacyl-tRNA synthetase family. The cofactor is Zn(2+).

It localises to the cytoplasm. The catalysed reaction is tRNA(Lys) + L-lysine + ATP = L-lysyl-tRNA(Lys) + AMP + diphosphate. This chain is Lysine--tRNA ligase (lysS), found in Thermococcus kodakarensis (strain ATCC BAA-918 / JCM 12380 / KOD1) (Pyrococcus kodakaraensis (strain KOD1)).